The primary structure comprises 101 residues: Small ribosomal subunit protein bS18c (101 aa).

It belongs to the bacterial ribosomal protein bS18 family. Part of the 30S ribosomal subunit.

The protein localises to the plastid. The protein resides in the chloroplast. The sequence is that of Small ribosomal subunit protein bS18c from Gossypium hirsutum (Upland cotton).